The sequence spans 278 residues: MKNDKSYPFPTYSGLLNSEHYDKIGPALWLFLWFISSTTKEIEKDGVSWGIVLGHKPLKAREMAAVFGVSEKTVRRWLELLENHDYIKAVRAPYGLMISVKHSKKFSFRSDNTVHGSLKERPFSPQTPDTNDRTDIDKTNKYTAADDAVDHIAKRFTQLRSAQEGRTVYPSSRDYQAIARIVAIGVPVTQTIKWLEECFQAFENRRTAASETIKAFRYCSKFIEDRFFAQQAKKNAAIQHERMKKHDKTNNRTDFGRAEKRETSITGGQTGRIRRKQV.

A DNA-binding region (H-T-H motif) is located at residues 58–80 (LKAREMAAVFGVSEKTVRRWLEL). 2 disordered regions span residues 117-136 (SLKE…RTDI) and 239-278 (QHER…RKQV). Residues 248 to 263 (KTNNRTDFGRAEKRET) show a composition bias toward basic and acidic residues.

To B.subtilis YqaL.

The chain is Phage-like element PBSX protein XkdB (xkdB) from Bacillus subtilis (strain 168).